Consider the following 88-residue polypeptide: Small ribosomal subunit protein bS16 (88 aa).

It belongs to the bacterial ribosomal protein bS16 family.

The sequence is that of Small ribosomal subunit protein bS16 from Anaeromyxobacter sp. (strain K).